The chain runs to 234 residues: Cytochrome b (234 aa).

4 consecutive transmembrane segments (helical) span residues 33–53 (FGSLLGLCLMIQILTGLFLAM), 77–98 (WLIRYLHANGASMFFICLYMHV), 113–133 (WNIGIILLFAVMATAFMGYVL), and 178–198 (FFAFHFILPFIIAALVMIHLL). Positions 83 and 97 each coordinate heme b. 2 residues coordinate heme b: H182 and H196. An a ubiquinone-binding site is contributed by H201. A helical membrane pass occupies residues 226 to 234 (IKDLLGFLV).

This sequence belongs to the cytochrome b family. As to quaternary structure, the cytochrome bc1 complex contains 11 subunits: 3 respiratory subunits (MT-CYB, CYC1 and UQCRFS1), 2 core proteins (UQCRC1 and UQCRC2) and 6 low-molecular weight proteins (UQCRH/QCR6, UQCRB/QCR7, UQCRQ/QCR8, UQCR10/QCR9, UQCR11/QCR10 and a cleavage product of UQCRFS1). This cytochrome bc1 complex then forms a dimer. Heme b is required as a cofactor.

The protein resides in the mitochondrion inner membrane. Component of the ubiquinol-cytochrome c reductase complex (complex III or cytochrome b-c1 complex) that is part of the mitochondrial respiratory chain. The b-c1 complex mediates electron transfer from ubiquinol to cytochrome c. Contributes to the generation of a proton gradient across the mitochondrial membrane that is then used for ATP synthesis. The protein is Cytochrome b (MT-CYB) of Lepus arcticus (Arctic hare).